The primary structure comprises 1432 residues: Probable ATP-dependent RNA helicase spindle-E (1432 aa).

A Helicase ATP-binding domain is found at 125-292 (MKAIRENTVV…FATKNGIPPV (168 aa)). Position 138-145 (138-145 (GETGCGKT)) interacts with ATP. Positions 238-241 (DEVH) match the DEAH box motif. One can recognise a Helicase C-terminal domain in the interval 342–525 (VIDNMERRTE…SSVLKAKELN (184 aa)). Positions 936–999 (AGSITKNLKL…RFMSNQLKRE (64 aa)) constitute a Tudor domain.

The protein belongs to the DEAD box helicase family. DEAH subfamily.

Its subcellular location is the cytoplasm. The enzyme catalyses ATP + H2O = ADP + phosphate + H(+). Its function is as follows. Probable ATP-binding RNA helicase which plays a central role during spermatogenesis and oogenesis by repressing transposable elements and preventing their mobilization, which is essential for the germline integrity. Acts via the piRNA metabolic process, which mediates the repression of transposable elements during meiosis by forming complexes composed of piRNAs and Piwi and govern the methylation and subsequent repression of transposons. Involved in the repression of LTR retrotransposon copia. Also involved in telomere regulation by repressing specialized telomeric retroelements HeT-A, TAHRE, and TART; Drosophila telomeres being maintained by transposition of specialized telomeric retroelements. Involved in telomeric trans-silencing, a repression mechanism by which a transposon or a transgene inserted in subtelomeric heterochromatin has the capacity to repress in trans in the female germline, a homologous transposon, or transgene located in euchromatin. Involved in the repression of testis-expressed Stellate genes by the homologous Su(Ste) repeats. Required for anteroposterior and dorsoventral axis formation during oogenesis. The chain is Probable ATP-dependent RNA helicase spindle-E (spn-E) from Drosophila willistoni (Fruit fly).